A 354-amino-acid chain; its full sequence is Selenide, water dikinase (354 aa).

The active site involves Sec21. Sec21 is a non-standard amino acid (selenocysteine). ATP is bound by residues Lys24 and 51–53; that span reads TSD. Residue Asp54 participates in Mg(2+) binding. Residues Asp71, Asp94, and 141 to 143 contribute to the ATP site; that span reads GHT. Asp94 serves as a coordination point for Mg(2+). Asp229 contributes to the Mg(2+) binding site.

The protein belongs to the selenophosphate synthase 1 family. Class I subfamily. Homodimer. The cofactor is Mg(2+).

The catalysed reaction is hydrogenselenide + ATP + H2O = selenophosphate + AMP + phosphate + 2 H(+). Functionally, synthesizes selenophosphate from selenide and ATP. The chain is Selenide, water dikinase from Treponema denticola (strain ATCC 35405 / DSM 14222 / CIP 103919 / JCM 8153 / KCTC 15104).